Here is a 671-residue protein sequence, read N- to C-terminus: MSQRKNHRGQQKKAAASPSKSAASSQLQTLSEMFPAWEADELAALLSEHHDDVEIVIDLIVNNKVSKWEPIKKEPKPKKREEVITDSNATQTSHAHNDAKPKHSRERPKNEKRRERKPVQRKEPSAAVQAAQAASPAPAAAASTSSTSSASVPSNSWAAALSKDAKPKQKKEEPEVKEPAQEQEQPKEEQEPAVAAATAAAASAASAPQETQAAPAAPAAPVAPTTTTTNDHAEKPATTWASAIKPKAKPIKKKAPEHVPEEEVSEVVVVETEVSDVVLPQQVAEVGVSFGSLALETEDVPESQPEAQPKPEAQPESQPEPEVQPEAEPEIQQEPVQQEQVQPQQVQQQVQSQPEQPQQPVPVQTQEQPQQPQQPQQPQQPQQPQAQQPQQPQQPQQPQQPQQQPQQQGQQPPHFEKPAQGYDYYPQFQQTQQYQQAAGSVPGQYAYPSFDYSAAYGQLGQAGLGSVASPGYYPAAVNGAAKPAAPAPASAEIGQSPLVQPNNMGQQSMQSGQAQVPGAAPFGYPNYYNYFYNTPFYGNGGMAASTTSYGAQQQPQSQQAAGENAPASGEPETNGVPAQAQANNQYYAQYYGQPNQFGSRGGYPYSGYPASQPYPQSAGQEQPEGAQPSAPQGAPVPGVPSYPQQMPQYGAYQQFPQYGSYQDSNQYRGWY.

Residues 1–11 (MSQRKNHRGQQ) show a composition bias toward basic residues. 6 disordered regions span residues 1–27 (MSQRKNHRGQQKKAAASPSKSAASSQL), 66–266 (SKWE…EVSE), 294–439 (ALET…QAAG), 480–516 (AAKPAAPAPASAEIGQSPLVQPNNMGQQSMQSGQAQV), 546–577 (TTSYGAQQQPQSQQAAGENAPASGEPETNGVP), and 601–651 (GGYP…QYGA). Low complexity predominate over residues 12 to 26 (KKAAASPSKSAASSQ). Residues 22-65 (AASSQLQTLSEMFPAWEADELAALLSEHHDDVEIVIDLIVNNKV) enclose the CUE domain. Over residues 66 to 83 (SKWEPIKKEPKPKKREEV) the composition is skewed to basic and acidic residues. Residues 85–94 (TDSNATQTSH) are compositionally biased toward polar residues. Residues 95–124 (AHNDAKPKHSRERPKNEKRRERKPVQRKEP) show a composition bias toward basic and acidic residues. Positions 125–160 (SAAVQAAQAASPAPAAAASTSSTSSASVPSNSWAAA) are enriched in low complexity. Residues 163-190 (KDAKPKQKKEEPEVKEPAQEQEQPKEEQ) show a composition bias toward basic and acidic residues. Composition is skewed to low complexity over residues 192 to 229 (PAVAAATAAAASAASAPQETQAAPAAPAAPVAPTTTTT), 302 to 322 (ESQPEAQPKPEAQPESQPEPE), 332 to 413 (QQEP…QQPP), 422 to 436 (YDYYPQFQQTQQYQQ), 480 to 491 (AAKPAAPAPASA), 502 to 513 (NNMGQQSMQSGQ), 551 to 561 (AQQQPQSQQAA), and 602 to 617 (GYPYSGYPASQPYPQS).

This sequence belongs to the DEF1 family. In terms of assembly, homodimer; may form higher order oligomers. Interacts with the large RNA polymerase II subunit RPO21; the interaction is direct and serves to bridge RPO21 to the Elongin complex in a manner dependent on transcription stress. Interacts with RAD26. Post-translationally, ubiquitinated. Proteolytically cleaved by the proteasome in response to transcription stress; the resulting N-terminal form constitutes the activated nuclear form and the C-terminal portion is degraded.

The protein localises to the cytoplasm. It is found in the nucleus. Its subcellular location is the chromosome. It localises to the telomere. Functionally, recruits the ubiquitination machinery to RNA polymerase II for polyubiquitination, removal and degradation, when the transcription-coupled repair (TCR) factor RAD26 fails to efficiently displace stalled RNA polymerase II. Also involved in telomere length regulation. Binds DNA. The protein is RNA polymerase II degradation factor 1 (DEF1) of Clavispora lusitaniae (strain ATCC 42720) (Yeast).